The chain runs to 248 residues: Adenylate kinase isoenzyme 6 homolog HBR1 (248 aa).

The ATP site is built by Gly-19, Gly-21, Lys-22, Ser-23, and Ser-24. The NMPbind stretch occupies residues 49–72; that stretch reads NISEIAKERDCIESYDAKLDTSIV. Residues 124–134 are LID; sequence TRNYNDLKLQE. Arg-125 is a binding site for ATP. The segment at 188 to 248 is disordered; it reads DGVSNELNKQ…EMEHTEDIAQ (61 aa). A compositionally biased stretch (acidic residues) spans 202 to 238; sequence DSSDEGDDNSDSDEYELEEDEQEEEEEREEYDEETNE. Basic and acidic residues predominate over residues 239–248; it reads EMEHTEDIAQ.

It belongs to the adenylate kinase family. AK6 subfamily. Interacts with small ribosomal subunit protein uS11. Not a structural component of 43S pre-ribosomes, but transiently interacts with them by binding to uS11.

Its subcellular location is the cytoplasm. It localises to the nucleus. It catalyses the reaction AMP + ATP = 2 ADP. The enzyme catalyses ATP + H2O = ADP + phosphate + H(+). In terms of biological role, broad-specificity nucleoside monophosphate (NMP) kinase that catalyzes the reversible transfer of the terminal phosphate group between nucleoside triphosphates and monophosphates. Also has ATPase activity. Involved in the late cytoplasmic maturation steps of the 40S ribosomal particles, specifically 18S rRNA maturation. While NMP activity is not required for ribosome maturation, ATPase activity is. Associates transiently with small ribosomal subunit protein uS11. ATP hydrolysis breaks the interaction with uS11. May temporarily remove uS11 from the ribosome to enable a conformational change of the ribosomal RNA that is needed for the final maturation step of the small ribosomal subunit. Its NMP activity may have a role in nuclear energy homeostasis. Induces transcription of mating-type proteins ALPHA1 and ALPHA2 and moderately represses transcription of mating-type protein A1 in response to hemoglobin and growth signals. Involved in the induction of a high affinity fibronectin receptor by sub-inhibitory dosages of caspofungin. The chain is Adenylate kinase isoenzyme 6 homolog HBR1 (HBR1) from Candida albicans (strain SC5314 / ATCC MYA-2876) (Yeast).